Consider the following 559-residue polypeptide: Thermosome subunit alpha (559 aa).

Residues serine 535–serine 547 show a composition bias toward basic and acidic residues. Residues serine 535 to aspartate 559 are disordered.

This sequence belongs to the TCP-1 chaperonin family. As to quaternary structure, forms a Heterooligomeric complex of two stacked eight-membered rings.

In terms of biological role, molecular chaperone; binds unfolded polypeptides in vitro, and has a weak ATPase activity. The protein is Thermosome subunit alpha (thsA) of Saccharolobus solfataricus (strain ATCC 35092 / DSM 1617 / JCM 11322 / P2) (Sulfolobus solfataricus).